Consider the following 437-residue polypeptide: Trigger factor (437 aa).

Positions 163–248 (GDRVIIDFEG…LNNVSEATLP (86 aa)) constitute a PPIase FKBP-type domain.

The protein belongs to the FKBP-type PPIase family. Tig subfamily.

Its subcellular location is the cytoplasm. It catalyses the reaction [protein]-peptidylproline (omega=180) = [protein]-peptidylproline (omega=0). Functionally, involved in protein export. Acts as a chaperone by maintaining the newly synthesized protein in an open conformation. Functions as a peptidyl-prolyl cis-trans isomerase. The chain is Trigger factor (tig) from Neisseria meningitidis serogroup A / serotype 4A (strain DSM 15465 / Z2491).